The chain runs to 245 residues: Probable ABC transporter ATP-binding protein p29 (245 aa).

The ABC transporter domain occupies 7 to 245 (LSFEKVSIIY…KEQLYKIYDN (239 aa)). An ATP-binding site is contributed by 39-46 (GKSGVGKS).

It belongs to the ABC transporter superfamily.

Functionally, part of a high-affinity transport system. In Mycoplasma genitalium (strain ATCC 33530 / DSM 19775 / NCTC 10195 / G37) (Mycoplasmoides genitalium), this protein is Probable ABC transporter ATP-binding protein p29 (p29).